Consider the following 370-residue polypeptide: Glutamate 5-kinase (370 aa).

Lysine 13 provides a ligand contact to ATP. 3 residues coordinate substrate: serine 54, aspartate 140, and asparagine 152. Residues 172 to 173 (SD) and 214 to 220 (SGGMVTK) contribute to the ATP site. The PUA domain maps to 278-355 (TGTLVLDAGA…GEIEAILGFR (78 aa)).

It belongs to the glutamate 5-kinase family.

The protein resides in the cytoplasm. The enzyme catalyses L-glutamate + ATP = L-glutamyl 5-phosphate + ADP. It participates in amino-acid biosynthesis; L-proline biosynthesis; L-glutamate 5-semialdehyde from L-glutamate: step 1/2. Functionally, catalyzes the transfer of a phosphate group to glutamate to form L-glutamate 5-phosphate. The chain is Glutamate 5-kinase from Paramagnetospirillum magneticum (strain ATCC 700264 / AMB-1) (Magnetospirillum magneticum).